We begin with the raw amino-acid sequence, 396 residues long: Putative nickel insertion protein (396 aa).

This sequence belongs to the LarC family.

The polypeptide is Putative nickel insertion protein (Methanosarcina barkeri (strain Fusaro / DSM 804)).